We begin with the raw amino-acid sequence, 173 residues long: Shikimate kinase 1 (173 aa).

Residue 14-19 (GAGKST) coordinates ATP. Serine 18 is a binding site for Mg(2+). 3 residues coordinate substrate: aspartate 36, arginine 60, and glycine 82. ATP is bound at residue arginine 120. Residue arginine 140 coordinates substrate.

The protein belongs to the shikimate kinase family. Monomer. Mg(2+) serves as cofactor.

The protein localises to the cytoplasm. The catalysed reaction is shikimate + ATP = 3-phosphoshikimate + ADP + H(+). Its pathway is metabolic intermediate biosynthesis; chorismate biosynthesis; chorismate from D-erythrose 4-phosphate and phosphoenolpyruvate: step 5/7. Its function is as follows. Catalyzes the specific phosphorylation of the 3-hydroxyl group of shikimic acid using ATP as a cosubstrate. This is Shikimate kinase 1 from Hamiltonella defensa subsp. Acyrthosiphon pisum (strain 5AT).